A 158-amino-acid chain; its full sequence is Small ribosomal subunit protein uS13 (158 aa).

Belongs to the universal ribosomal protein uS13 family. Part of the 30S ribosomal subunit. Forms a loose heterodimer with protein S19. Forms two bridges to the 50S subunit in the 70S ribosome.

Located at the top of the head of the 30S subunit, it contacts several helices of the 16S rRNA. In the 70S ribosome it contacts the 23S rRNA (bridge B1a) and protein L5 of the 50S subunit (bridge B1b), connecting the 2 subunits; these bridges are implicated in subunit movement. The protein is Small ribosomal subunit protein uS13 of Picrophilus torridus (strain ATCC 700027 / DSM 9790 / JCM 10055 / NBRC 100828 / KAW 2/3).